A 385-amino-acid polypeptide reads, in one-letter code: Meiosis-specific protein MEI4 (385 aa).

The segment at 1-126 (MDVQKWYLRT…LSQHFVESCT (126 aa)) is interaction with REC114. The disordered stretch occupies residues 86 to 110 (AQEPKSSESTLTSMEDSGCDLSNEQ). Residues 92 to 107 (SESTLTSMEDSGCDLS) show a composition bias toward polar residues.

Belongs to the MEI4L family. Part of the MCD recombinosome complex, at least composed of IHO1, REC114 and MEI4. Forms a complex with REC114; the interaction is required for MEI4 stability. Interacts (via N-terminal domain) with REC114 (via C-terminal domain). Interacts with IHO1.

Its subcellular location is the chromosome. Its function is as follows. Required for DNA double-strand breaks (DSBs) formation in unsynapsed regions during meiotic recombination. Probably acts by forming a complex with IHO1 and REC114, which activates DSBs formation in unsynapsed regions, an essential step to ensure completion of synapsis. The chain is Meiosis-specific protein MEI4 from Homo sapiens (Human).